The chain runs to 176 residues: MDLSEPIHDFLLVFLGSGLILGGLGVVLLPNPIYSAFSLGLVLVCTSLFYILSNAYFVAAAQLLIYVGAINVLIIFAVMFMNGSEYYKDFHLWTVGDGITSMVCISLFISLITTISDTSWYGIIWTTRSNQIIEQDFLSNSQQIGIHLSTDFFLPFELISIILLVALIGAIAVARQ.

5 consecutive transmembrane segments (helical) span residues 10–30 (FLLV…VLLP), 32–52 (PIYS…FYIL), 61–81 (AQLL…VMFM), 92–112 (LWTV…ISLI), and 152–172 (FFLP…GAIA).

The protein belongs to the complex I subunit 6 family. NDH is composed of at least 16 different subunits, 5 of which are encoded in the nucleus.

The protein resides in the plastid. It localises to the chloroplast thylakoid membrane. The enzyme catalyses a plastoquinone + NADH + (n+1) H(+)(in) = a plastoquinol + NAD(+) + n H(+)(out). It catalyses the reaction a plastoquinone + NADPH + (n+1) H(+)(in) = a plastoquinol + NADP(+) + n H(+)(out). Its function is as follows. NDH shuttles electrons from NAD(P)H:plastoquinone, via FMN and iron-sulfur (Fe-S) centers, to quinones in the photosynthetic chain and possibly in a chloroplast respiratory chain. The immediate electron acceptor for the enzyme in this species is believed to be plastoquinone. Couples the redox reaction to proton translocation, and thus conserves the redox energy in a proton gradient. This chain is NAD(P)H-quinone oxidoreductase subunit 6, chloroplastic (ndhG), found in Solanum lycopersicum (Tomato).